Reading from the N-terminus, the 580-residue chain is Putative adenine deaminase YerA (580 aa).

At serine 399 the chain carries Phosphoserine.

Belongs to the metallo-dependent hydrolases superfamily. Adenine deaminase family.

The enzyme catalyses adenine + H2O + H(+) = hypoxanthine + NH4(+). The protein is Putative adenine deaminase YerA (yerA) of Bacillus subtilis (strain 168).